The following is a 693-amino-acid chain: Polyribonucleotide nucleotidyltransferase (693 aa).

Asp-485 and Asp-491 together coordinate Mg(2+). In terms of domain architecture, KH spans 552–611; it reads PRIMVLEINPSKIGDLIGPSGKNIKKIIEETHTTINIKPEGLVYISAPDQESAEKAAQMV. One can recognise an S1 motif domain in the interval 621–691; sequence GDIFLGKVIR…SSGRISLTRK (71 aa).

The protein belongs to the polyribonucleotide nucleotidyltransferase family. Mg(2+) is required as a cofactor.

Its subcellular location is the cytoplasm. The catalysed reaction is RNA(n+1) + phosphate = RNA(n) + a ribonucleoside 5'-diphosphate. Functionally, involved in mRNA degradation. Catalyzes the phosphorolysis of single-stranded polyribonucleotides processively in the 3'- to 5'-direction. This is Polyribonucleotide nucleotidyltransferase from Dictyoglomus thermophilum (strain ATCC 35947 / DSM 3960 / H-6-12).